The sequence spans 752 residues: MAP/microtubule affinity-regulating kinase 4 (752 aa).

A disordered region spans residues 1–36 (MSSRTVLAPGNDRNSDTHGTLGSGRSSDKGPSWSSR). Residues 59-310 (YRLLRTIGKG…LEQIMKDKWI (252 aa)) enclose the Protein kinase domain. Residues 65–73 (IGKGNFAKV) and Lys-88 contribute to the ATP site. The Proton acceptor role is filled by Asp-181. Thr-214 is subject to Phosphothreonine; by LKB1. Positions 324–368 (EPEEDFGDTKRIEVMVGMGYTREEIKESLTSQKYNEVTATYLLLG) constitute a UBA domain. A disordered region spans residues 385–614 (ARVRAPSDTT…PAGRPRPTTN (230 aa)). Over residues 391–406 (SDTTNGTSSSKGTSHS) the composition is skewed to low complexity. A phosphoserine mark is found at Ser-423 and Ser-543. Positions 544-553 (PSSHSLAPPS) are enriched in low complexity. The region spanning 703-752 (AGGPEPLSHFEVEVCQLPRPGLRGVLFRRVAGTALAFRTLVTRISNDLEL) is the KA1 domain.

The protein belongs to the protein kinase superfamily. CAMK Ser/Thr protein kinase family. SNF1 subfamily. As to quaternary structure, interacts with MAPT/TAU. Interacts with gamma-tubulin. Interacts with ODF2. Interacts with USP9X. Interacts with YWHAQ. Interacts with NLRP3; promoting NLRP3 recruitment to microtubule organizing center (MTOC). Mg(2+) is required as a cofactor. In terms of processing, ubiquitinated with 'Lys-29'- and 'Lys-33'-linked polyubiquitins which appear to impede LKB1-mediated phosphorylation. Deubiquitinated by USP9X. Phosphorylated at Thr-214 by STK11/LKB1 in complex with STE20-related adapter-alpha (STRADA) pseudo kinase and CAB39. Phosphorylated throughout the cell cycle. As to expression, ubiquitous. Isoform 2 is brain-specific. Expressed at highest levels in brain and testis. Also expressed in heart, lung, liver, muscle, kidney and spleen.

Its subcellular location is the cytoplasm. The protein localises to the cytoskeleton. It localises to the microtubule organizing center. The protein resides in the centrosome. It is found in the cilium basal body. Its subcellular location is the cilium axoneme. The protein localises to the cell projection. It localises to the dendrite. The enzyme catalyses L-seryl-[protein] + ATP = O-phospho-L-seryl-[protein] + ADP + H(+). It catalyses the reaction L-threonyl-[protein] + ATP = O-phospho-L-threonyl-[protein] + ADP + H(+). Its activity is regulated as follows. Activated by phosphorylation on Thr-214. Functionally, serine/threonine-protein kinase. Phosphorylates the microtubule-associated protein MAPT/TAU. Also phosphorylates the microtubule-associated proteins MAP2 and MAP4. Involved in regulation of the microtubule network, causing reorganization of microtubules into bundles. Required for the initiation of axoneme extension during cilium assembly. Regulates the centrosomal location of ODF2 and phosphorylates ODF2 in vitro. Plays a role in cell cycle progression, specifically in the G1/S checkpoint. Reduces neuronal cell survival. Plays a role in energy homeostasis by regulating satiety and metabolic rate. Promotes adipogenesis by activating JNK1 and inhibiting the p38MAPK pathway, and triggers apoptosis by activating the JNK1 pathway. Phosphorylates mTORC1 complex member RPTOR and acts as a negative regulator of the mTORC1 complex, probably due to disruption of the interaction between phosphorylated RPTOR and the RRAGA/RRAGC heterodimer which is required for mTORC1 activation. Involved in NLRP3 positioning along microtubules by mediating NLRP3 recruitment to microtubule organizing center (MTOC) upon inflammasome activation. The sequence is that of MAP/microtubule affinity-regulating kinase 4 from Homo sapiens (Human).